The sequence spans 157 residues: Ubiquitin-like protein 4A (157 aa).

One can recognise a Ubiquitin-like domain in the interval 1-76 (MQLTVKALQG…LNLVVKPLEK (76 aa)). K48 participates in a covalent cross-link: Glycyl lysine isopeptide (Lys-Gly) (interchain with G-Cter in ubiquitin). The residue at position 90 (S90) is a Phosphoserine. The interval 96 to 138 (WQLISKVLARHFSAADASRVLEQLQRDYERSLSRLTLDDIERL) is required and sufficient for interaction with BAG6.

In terms of assembly, component of the BAG6/BAT3 complex, at least composed of BAG6, UBL4A and GET4/TRC35. Interacts with BAG6; the interaction is direct and required for UBL4A protein stability. Interacts with USP13; may be indirect via BAG6. Polyubiquitinated. Ubiquitination by AMFR and deubiquitination by USP13 may regulate the interaction between the BAG6/BAT complex and SGTA and therefore may regulate client proteins fate.

The protein resides in the cytoplasm. Its subcellular location is the cytosol. It is found in the nucleus. Functionally, as part of a cytosolic protein quality control complex, the BAG6/BAT3 complex, maintains misfolded and hydrophobic patches-containing proteins in a soluble state and participates in their proper delivery to the endoplasmic reticulum or alternatively can promote their sorting to the proteasome where they undergo degradation. The BAG6/BAT3 complex is involved in the post-translational delivery of tail-anchored/type II transmembrane proteins to the endoplasmic reticulum membrane. Recruited to ribosomes, it interacts with the transmembrane region of newly synthesized tail-anchored proteins and together with SGTA and ASNA1 mediates their delivery to the endoplasmic reticulum. Client proteins that cannot be properly delivered to the endoplasmic reticulum are ubiquitinated and sorted to the proteasome. Similarly, the BAG6/BAT3 complex also functions as a sorting platform for proteins of the secretory pathway that are mislocalized to the cytosol either delivering them to the proteasome for degradation or to the endoplasmic reticulum. The BAG6/BAT3 complex also plays a role in the endoplasmic reticulum-associated degradation (ERAD), a quality control mechanism that eliminates unwanted proteins of the endoplasmic reticulum through their retrotranslocation to the cytosol and their targeting to the proteasome. It maintains these retrotranslocated proteins in an unfolded yet soluble state condition in the cytosol to ensure their proper delivery to the proteasome. In Callithrix jacchus (White-tufted-ear marmoset), this protein is Ubiquitin-like protein 4A (UBL4A).